Consider the following 148-residue polypeptide: Leghemoglobin 29 (148 aa).

In terms of domain architecture, Globin spans 2-148; sequence EFTLRQEALV…LAVAIMKEMS (147 aa). Tyr-30 is modified (nitrated tyrosine). A heme b-binding site is contributed by Ser-45. A Phosphoserine modification is found at Ser-45. Residue His-63 coordinates O2. Heme b-binding residues include His-95 and Lys-98. Tyr-136 carries the nitrated tyrosine modification.

This sequence belongs to the plant globin family. As to quaternary structure, monomer. Nitrated in effective nodules and particularly in hypoxic conditions; this mechanism may play a protective role in the symbiosis by buffering toxic peroxynitrite NO(2)(-). Nitration level decrease during nodule senescence. Post-translationally, phosphorylation at Ser-45 disrupts the molecular environment of its porphyrin ring oxygen binding pocket, thus leading to a reduced oxygen consumption and to the delivery of oxygen O(2) to symbiosomes. In terms of tissue distribution, accumulates in root nodules after inoculation by bacteria of the genus Rhizobium. Expressed in mycorrhizal roots in the presence of the mycorrhizal fungus Glomus fasciculatum.

It is found in the cytoplasm. Its subcellular location is the cytosol. The protein localises to the nucleus. Leghemoglobin that reversibly binds oxygen O(2) through a pentacoordinated heme iron. In root nodules, facilitates the diffusion of oxygen to the bacteroids while preventing the bacterial nitrogenase from being inactivated by buffering dioxygen, nitric oxide and carbon monoxide, and promoting the formation of reactive oxygen species (ROS, e.g. H(2)O(2)). This role is essential for symbiotic nitrogen fixation (SNF). The sequence is that of Leghemoglobin 29 from Vicia faba (Broad bean).